The primary structure comprises 501 residues: Cilia- and flagella-associated protein 45 (501 aa).

The stretch at 75–114 (MTAEDVAAAKREAEAKREQLQAVSKARKEKMLKLEEEAKK) forms a coiled coil.

It belongs to the CFAP45 family.

The protein localises to the cell projection. The protein resides in the cilium. It is found in the flagellum. The protein is Cilia- and flagella-associated protein 45 of Chlamydomonas reinhardtii (Chlamydomonas smithii).